The primary structure comprises 67 residues: Beta-defensin 123 (67 aa).

The signal sequence occupies residues 1–20 (MKLLLLTLTVLLLLSQLTPG). 3 cysteine pairs are disulfide-bonded: cysteine 25–cysteine 52, cysteine 32–cysteine 46, and cysteine 36–cysteine 53.

This sequence belongs to the beta-defensin family. Abundant expression in the male reproductive tract only. Expressed abundantly in testis, while expression in epididymis decreased gradually from caput to cauda.

It is found in the secreted. In terms of biological role, has antibacterial activity. The protein is Beta-defensin 123 (DEFB123) of Macaca mulatta (Rhesus macaque).